The sequence spans 400 residues: MIGVIGVKRNVDIAIREKLALYPKKHKKYVGELLNSFKEVVILNTCNRTEIYFNCTEEISEDEIFDKIFNVFNWNDDLKKYMFLSKEKRAVTHLMEVICGFHSRILGEDQILGQIKGAYKTAISDNSISSELQKMFEIAIACGKKFKTECKMFEVPVSSVSISINSALLKGCRKFMVLGYGEIGKLAIKHLLSHKVECIYLIVRDKSKASDLEGEIVEVLDFNEKNQVINEIDCIVSCTAAPHTVVRNEDIKTEGETIHIYDLAVPRDVDKELSEKERVILKDIDEISKIDDKNKKIRKERMEEYKHIVEESIDEFLNWLKIREVSSKIRNIKIRENEICSERIKTFSNKGNGENAKLAERMIKSTADAYVNRAIELLKSEALKGSDSYCAEIIEKIFLT.

Substrate is bound by residues 45–48, S103, 108–110, and Q114; these read TCNR and EDQ. The active-site Nucleophile is C46. 179–184 provides a ligand contact to NADP(+); that stretch reads GYGEIG.

This sequence belongs to the glutamyl-tRNA reductase family. Homodimer.

It carries out the reaction (S)-4-amino-5-oxopentanoate + tRNA(Glu) + NADP(+) = L-glutamyl-tRNA(Glu) + NADPH + H(+). Its pathway is porphyrin-containing compound metabolism; protoporphyrin-IX biosynthesis; 5-aminolevulinate from L-glutamyl-tRNA(Glu): step 1/2. In terms of biological role, catalyzes the NADPH-dependent reduction of glutamyl-tRNA(Glu) to glutamate 1-semialdehyde (GSA). This is Glutamyl-tRNA reductase from Clostridium perfringens (strain ATCC 13124 / DSM 756 / JCM 1290 / NCIMB 6125 / NCTC 8237 / Type A).